The primary structure comprises 232 residues: Thrombin-like enzyme BjussuSP-1 (232 aa).

In terms of domain architecture, Peptidase S1 spans 1-223 (VLGGDECDIN…YTDWIQRNIA (223 aa)). 6 disulfide bridges follow: cysteine 7–cysteine 138, cysteine 25–cysteine 41, cysteine 73–cysteine 230, cysteine 117–cysteine 184, cysteine 149–cysteine 163, and cysteine 174–cysteine 199. Histidine 40 serves as the catalytic Charge relay system. An N-linked (GlcNAc...) asparagine glycan is attached at asparagine 77. Aspartate 85 (charge relay system) is an active-site residue. Asparagine 129 is a glycosylation site (N-linked (GlcNAc...) asparagine). Serine 178 (charge relay system) is an active-site residue.

It belongs to the peptidase S1 family. Snake venom subfamily. In terms of assembly, monomer. Post-translationally, N-glycosylated. Contains sialic acid residues. Deglycosylation reduces in 50% the formation of fibrin clot. In terms of tissue distribution, expressed by the venom gland.

The protein resides in the secreted. Its activity is regulated as follows. Inhibited by leupeptin, heparin, and 1.10-phenantroline. Functionally, thrombin-like enzyme that shows clotting activity upon human plasma. Shows specific fibrinogenolytic activity for Aalpha chain (FGA). Hydrolyzes fibrin, BAPNA and TAME, as well as chromogenic artificial substrates of the blood coagulation cascasde: S-27654 for factor X (F10), S-2302 for kallikrein (KLK), factor XIa (F11), and XIIa (F12), and S-2266 for kallikrein and factor XIa (F11). Subcutaneous injection into mice induces a mild edema. Intravenous and intramuscular injection reduce plasma fibrinogen concentration and increase the levels of fibrin(ogen) degradation products. Intramuscular injection also promotes an increase in the expression of proMMP-9, but is unable to activate it. The sequence is that of Thrombin-like enzyme BjussuSP-1 from Bothrops jararacussu (Jararacussu).